We begin with the raw amino-acid sequence, 366 residues long: Mitochondrial carrier protein MTM1 (366 aa).

Solcar repeat units lie at residues 14 to 149, 156 to 250, and 266 to 359; these read ERML…IRDV, YPTL…CKER, and VHFI…SKKV. Transmembrane regions (helical) follow at residues 17-36, 126-146, 162-182, 229-249, 268-286, and 331-352; these read LSAG…MDVV, SLTL…YEYI, LFCG…LELV, TLWR…LCKE, FINS…AICT, and LYTG…MISS.

It belongs to the mitochondrial carrier (TC 2.A.29) family.

It is found in the mitochondrion inner membrane. Functionally, involved in the mitochondrial activation of SOD2 by specifically facilitating insertion of the essential manganese cofactor. Has the ability to activate iron regulon in an iron-dependent manner. Responds to calorie restriction (CR) strength. This chain is Mitochondrial carrier protein MTM1 (MTM1), found in Saccharomyces cerevisiae (strain ATCC 204508 / S288c) (Baker's yeast).